The following is a 279-amino-acid chain: Fatty-acid-binding protein 1 (279 aa).

Residues Arg103, Tyr116, and Ser183 each coordinate dodecanoate.

Belongs to the chalcone isomerase family. As to expression, expressed in developing cotyledons, young seedlings, roots, seeds, embryos, macrospores, preanthesis and tapetum. Restricted to developing and reproductive tissues.

Its subcellular location is the plastid. The protein resides in the chloroplast stroma. Fatty-acid-binding protein. Interacts preferentially with saturated fatty acid. May be involved in alpha-linolenic (C18:3) metabolism. The chain is Fatty-acid-binding protein 1 (FAP1) from Arabidopsis thaliana (Mouse-ear cress).